The following is a 257-amino-acid chain: Alkaline phosphatase synthesis transcriptional regulatory protein SphR (257 aa).

Residues 25–148 enclose the Response regulatory domain; the sequence is RILVVEDEAV…ELVARCRALL (124 aa). A 4-aspartylphosphate modification is found at Asp83. Positions 159-257 form a DNA-binding region, ompR/PhoB-type; sequence PAVLRYEGLK…TVRGFGYRLG (99 aa).

In terms of processing, phosphorylated by SphS.

In terms of biological role, member of the two-component regulatory system SphR/SphS. Response regulator. Involved in inducible production of alkaline phosphatase in response to phosphate limitation as it is directly involved in the regulation of phoA transcription in response to phosphate limitation. Binds to two distinct sites upstream from the phoA promoter. This chain is Alkaline phosphatase synthesis transcriptional regulatory protein SphR (sphR), found in Synechococcus elongatus (strain ATCC 33912 / PCC 7942 / FACHB-805) (Anacystis nidulans R2).